Here is a 264-residue protein sequence, read N- to C-terminus: H-2 class II histocompatibility antigen, E-Q beta chain (264 aa).

An N-terminal signal peptide occupies residues 1–26 (MVWLPRVPCVAAVILLLTVLSPPVAL). The beta-1 stretch occupies residues 27–121 (VRDSRPWFLE…IFDNFLVRRR (95 aa)). The Extracellular portion of the chain corresponds to 27-225 (VRDSRPWFLE…KAQSTSAQNK (199 aa)). Intrachain disulfides connect C38/C106 and C144/C200. The N-linked (GlcNAc...) asparagine glycan is linked to N46. The tract at residues 122–225 (VEPTVTVYPT…KAQSTSAQNK (104 aa)) is beta-2. Residues 124–214 (PTVTVYPTKT…PSLTDPVTVE (91 aa)) enclose the Ig-like C1-type domain. A helical membrane pass occupies residues 226–246 (MLSGVGGFVLGLLFLGAGLFI). Topologically, residues 247–264 (YFRNQKGQSGLQPTGLLS) are cytoplasmic.

This sequence belongs to the MHC class II family.

The protein resides in the membrane. This is H-2 class II histocompatibility antigen, E-Q beta chain from Mus musculus (Mouse).